We begin with the raw amino-acid sequence, 314 residues long: 4-hydroxy-3-methylbut-2-enyl diphosphate reductase (314 aa).

Residue cysteine 18 participates in [4Fe-4S] cluster binding. (2E)-4-hydroxy-3-methylbut-2-enyl diphosphate is bound by residues histidine 47 and histidine 80. Dimethylallyl diphosphate contacts are provided by histidine 47 and histidine 80. The isopentenyl diphosphate site is built by histidine 47 and histidine 80. A [4Fe-4S] cluster-binding site is contributed by cysteine 102. Histidine 130 is a binding site for (2E)-4-hydroxy-3-methylbut-2-enyl diphosphate. Histidine 130 provides a ligand contact to dimethylallyl diphosphate. Isopentenyl diphosphate is bound at residue histidine 130. Residue glutamate 132 is the Proton donor of the active site. A (2E)-4-hydroxy-3-methylbut-2-enyl diphosphate-binding site is contributed by threonine 171. Residue cysteine 201 participates in [4Fe-4S] cluster binding. Serine 229, serine 230, asparagine 231, and serine 273 together coordinate (2E)-4-hydroxy-3-methylbut-2-enyl diphosphate. 4 residues coordinate dimethylallyl diphosphate: serine 229, serine 230, asparagine 231, and serine 273. Isopentenyl diphosphate contacts are provided by serine 229, serine 230, asparagine 231, and serine 273.

The protein belongs to the IspH family. It depends on [4Fe-4S] cluster as a cofactor.

The catalysed reaction is isopentenyl diphosphate + 2 oxidized [2Fe-2S]-[ferredoxin] + H2O = (2E)-4-hydroxy-3-methylbut-2-enyl diphosphate + 2 reduced [2Fe-2S]-[ferredoxin] + 2 H(+). It carries out the reaction dimethylallyl diphosphate + 2 oxidized [2Fe-2S]-[ferredoxin] + H2O = (2E)-4-hydroxy-3-methylbut-2-enyl diphosphate + 2 reduced [2Fe-2S]-[ferredoxin] + 2 H(+). It participates in isoprenoid biosynthesis; dimethylallyl diphosphate biosynthesis; dimethylallyl diphosphate from (2E)-4-hydroxy-3-methylbutenyl diphosphate: step 1/1. The protein operates within isoprenoid biosynthesis; isopentenyl diphosphate biosynthesis via DXP pathway; isopentenyl diphosphate from 1-deoxy-D-xylulose 5-phosphate: step 6/6. Catalyzes the conversion of 1-hydroxy-2-methyl-2-(E)-butenyl 4-diphosphate (HMBPP) into a mixture of isopentenyl diphosphate (IPP) and dimethylallyl diphosphate (DMAPP). Acts in the terminal step of the DOXP/MEP pathway for isoprenoid precursor biosynthesis. This is 4-hydroxy-3-methylbut-2-enyl diphosphate reductase from Phenylobacterium zucineum (strain HLK1).